Consider the following 207-residue polypeptide: Small ribosomal subunit protein uS4 (207 aa).

The interval 31-56 is disordered; sequence KCKLDSKPGQHGRTSGARTSDYGNQL. A compositionally biased stretch (polar residues) spans 42-53; sequence GRTSGARTSDYG. The 61-residue stretch at 97 to 157 folds into the S4 RNA-binding domain; that stretch reads TRLDNVVYRM…EKSKKQVRIV (61 aa).

This sequence belongs to the universal ribosomal protein uS4 family. In terms of assembly, part of the 30S ribosomal subunit. Contacts protein S5. The interaction surface between S4 and S5 is involved in control of translational fidelity.

Functionally, one of the primary rRNA binding proteins, it binds directly to 16S rRNA where it nucleates assembly of the body of the 30S subunit. In terms of biological role, with S5 and S12 plays an important role in translational accuracy. This Herminiimonas arsenicoxydans protein is Small ribosomal subunit protein uS4.